The sequence spans 542 residues: Tubby-related protein 1 (542 aa).

The interval 1–289 (MPLRDETLRE…RAPSPPVEVD (289 aa)) is disordered. Residues 91-104 (FLRDPEAKKRDPRE) show a composition bias toward basic and acidic residues. Over residues 114–132 (AEDEEEEEEEDEEDEEEEA) the composition is skewed to acidic residues. Residues 146–157 (PLREKSSADLKE) show a composition bias toward basic and acidic residues. Positions 262–275 (SNQKGKAKGKGKKK) are enriched in basic residues.

Belongs to the TUB family. As to quaternary structure, homodimer. May interact with ABCF1, PSIP1, ZEB1 and HMGB2 (Potential). Interacts with DNM1. Interacts with F-actin. Interacts with TUB. Interacts with TYRO3. Retina-specific.

It localises to the cytoplasm. The protein resides in the cell membrane. The protein localises to the secreted. Its subcellular location is the synapse. Its function is as follows. Required for normal development of photoreceptor synapses. Required for normal photoreceptor function and for long-term survival of photoreceptor cells. Interacts with cytoskeleton proteins and may play a role in protein transport in photoreceptor cells. Binds lipids, especially phosphatidylinositol 3-phosphate, phosphatidylinositol 4-phosphate, phosphatidylinositol 5-phosphate, phosphatidylinositol 3,4-bisphosphate, phosphatidylinositol 4,5-bisphosphate, phosphatidylinositol 3,4,5-bisphosphate, phosphatidylserine and phosphatidic acid (in vitro). Contribute to stimulation of phagocytosis of apoptotic retinal pigment epithelium (RPE) cells and macrophages. The chain is Tubby-related protein 1 (TULP1) from Homo sapiens (Human).